Reading from the N-terminus, the 216-residue chain is Acyl-homoserine-lactone synthase (216 aa).

The protein belongs to the autoinducer synthase family.

It carries out the reaction a fatty acyl-[ACP] + S-adenosyl-L-methionine = an N-acyl-L-homoserine lactone + S-methyl-5'-thioadenosine + holo-[ACP] + H(+). Its function is as follows. Required for the synthesis of OHHL (N-(3-oxohexanoyl)-L-homoserine lactone), an autoinducer molecule which binds to a yet uncharacterized transcriptional regulator. This is Acyl-homoserine-lactone synthase (eagI) from Enterobacter agglomerans (Erwinia herbicola).